The chain runs to 897 residues: Protein transport protein SEC24-1 (897 aa).

4 residues coordinate Zn(2+): cysteine 213, cysteine 216, cysteine 235, and cysteine 238. The segment at 213-238 (CRRCRSYINPFAKFIEQGRRWRCNFC) is zinc finger-like.

Belongs to the SEC23/SEC24 family. SEC24 subfamily. The COPII coat is composed of at least 5 proteins: the SEC23/24 complex, the SEC13/31 complex, and the protein SAR1. Golgi apparatus membrane; Peripheral membrane protein; Cytoplasmic side.

The protein localises to the cytoplasm. It is found in the cytoplasmic vesicle. It localises to the COPII-coated vesicle membrane. The protein resides in the endoplasmic reticulum membrane. Its subcellular location is the golgi apparatus membrane. In terms of biological role, component of the coat protein complex II (COPII) which promotes the formation of transport vesicles from the endoplasmic reticulum (ER). The coat has two main functions, the physical deformation of the endoplasmic reticulum membrane into vesicles and the selection of cargo molecules. The protein is Protein transport protein SEC24-1 (SEC241) of Candida glabrata (strain ATCC 2001 / BCRC 20586 / JCM 3761 / NBRC 0622 / NRRL Y-65 / CBS 138) (Yeast).